Here is a 414-residue protein sequence, read N- to C-terminus: Gamma-glutamyl phosphate reductase (414 aa).

The protein belongs to the gamma-glutamyl phosphate reductase family.

The protein localises to the cytoplasm. The catalysed reaction is L-glutamate 5-semialdehyde + phosphate + NADP(+) = L-glutamyl 5-phosphate + NADPH + H(+). Its pathway is amino-acid biosynthesis; L-proline biosynthesis; L-glutamate 5-semialdehyde from L-glutamate: step 2/2. Functionally, catalyzes the NADPH-dependent reduction of L-glutamate 5-phosphate into L-glutamate 5-semialdehyde and phosphate. The product spontaneously undergoes cyclization to form 1-pyrroline-5-carboxylate. This chain is Gamma-glutamyl phosphate reductase, found in Xanthomonas campestris pv. campestris (strain ATCC 33913 / DSM 3586 / NCPPB 528 / LMG 568 / P 25).